Reading from the N-terminus, the 220-residue chain is MSTLHKVKAYFGMAPMDDYDDEYYEDDDRAERGAARGYARRPREDRFEEEGYIDRAGREYDDRPAPREYDEPPIYRGGYDEPRFDPRLRGPREFERPAPRLGALRGSTRGALAMDPRRMAMLFEEGSPLAKITTLRPKDYSEARTIGEKFRDGTPVIMDLVSMDNADAKRLVDFAAGLAFALRGSFDKVATKVFLLSPADVDVTADERRRIAEAGFYAYQ.

Residues 33-82 (GAARGYARRPREDRFEEEGYIDRAGREYDDRPAPREYDEPPIYRGGYDEP) form a disordered region. Residues 52 to 70 (YIDRAGREYDDRPAPREYD) are compositionally biased toward basic and acidic residues.

It belongs to the SepF family. In terms of assembly, homodimer. Interacts with FtsZ.

It localises to the cytoplasm. Functionally, cell division protein that is part of the divisome complex and is recruited early to the Z-ring. Probably stimulates Z-ring formation, perhaps through the cross-linking of FtsZ protofilaments. Its function overlaps with FtsA. This Mycobacterium sp. (strain JLS) protein is Cell division protein SepF.